A 221-amino-acid chain; its full sequence is Protein OPG170 (221 aa).

An N-terminal signal peptide occupies residues 1–17; it reads MYLLFIILMYLLPFSFQ. Asn72 is a glycosylation site (N-linked (GlcNAc...) asparagine; by host).

Belongs to the orthopoxvirus OPG170 family.

It is found in the secreted. In terms of biological role, may interact with several cellular chemokines to interfere with chemokine-glycosaminoglycan (GAG) interactions at the cell surface to alter chemotaxis of nearby responsive cells. The chain is Protein OPG170 (OPG170) from Monkeypox virus.